A 1240-amino-acid polypeptide reads, in one-letter code: DNA-directed RNA polymerase subunit beta (1240 aa).

Belongs to the RNA polymerase beta chain family. The RNAP catalytic core consists of 2 alpha, 1 beta, 1 beta' and 1 omega subunit. When a sigma factor is associated with the core the holoenzyme is formed, which can initiate transcription.

The enzyme catalyses RNA(n) + a ribonucleoside 5'-triphosphate = RNA(n+1) + diphosphate. Its function is as follows. DNA-dependent RNA polymerase catalyzes the transcription of DNA into RNA using the four ribonucleoside triphosphates as substrates. This chain is DNA-directed RNA polymerase subunit beta, found in Rhodopirellula baltica (strain DSM 10527 / NCIMB 13988 / SH1).